Reading from the N-terminus, the 132-residue chain is MVMTDPIADFLTRIRNANMVKHETLEVPASKIKRDIAEILKREGFIRDVEYIEDDKQGVIRVFLKYGKNEERVITNLKRISKPGLRAYVKADEVPKVLNGLGIAIISTSEGVITDKEARAKNIGGEVIAYVW.

It belongs to the universal ribosomal protein uS8 family. As to quaternary structure, part of the 30S ribosomal subunit. Contacts proteins S5 and S12.

Functionally, one of the primary rRNA binding proteins, it binds directly to 16S rRNA central domain where it helps coordinate assembly of the platform of the 30S subunit. The chain is Small ribosomal subunit protein uS8 from Enterococcus faecalis (strain ATCC 700802 / V583).